The sequence spans 258 residues: tRNA pseudouridine synthase A (258 aa).

Aspartate 52 acts as the Nucleophile in catalysis. Tyrosine 110 serves as a coordination point for substrate.

This sequence belongs to the tRNA pseudouridine synthase TruA family. Homodimer.

It catalyses the reaction uridine(38/39/40) in tRNA = pseudouridine(38/39/40) in tRNA. Formation of pseudouridine at positions 38, 39 and 40 in the anticodon stem and loop of transfer RNAs. This is tRNA pseudouridine synthase A from Francisella philomiragia subsp. philomiragia (strain ATCC 25017 / CCUG 19701 / FSC 153 / O#319-036).